The primary structure comprises 372 residues: Aminomethyltransferase (372 aa).

This sequence belongs to the GcvT family. The glycine cleavage system is composed of four proteins: P, T, L and H.

The catalysed reaction is N(6)-[(R)-S(8)-aminomethyldihydrolipoyl]-L-lysyl-[protein] + (6S)-5,6,7,8-tetrahydrofolate = N(6)-[(R)-dihydrolipoyl]-L-lysyl-[protein] + (6R)-5,10-methylene-5,6,7,8-tetrahydrofolate + NH4(+). The glycine cleavage system catalyzes the degradation of glycine. This is Aminomethyltransferase from Prochlorococcus marinus (strain NATL1A).